The sequence spans 200 residues: dTTP/UTP pyrophosphatase (200 aa).

Catalysis depends on D81, which acts as the Proton acceptor.

The protein belongs to the Maf family. YhdE subfamily. A divalent metal cation serves as cofactor.

The protein resides in the cytoplasm. It carries out the reaction dTTP + H2O = dTMP + diphosphate + H(+). The enzyme catalyses UTP + H2O = UMP + diphosphate + H(+). Its function is as follows. Nucleoside triphosphate pyrophosphatase that hydrolyzes dTTP and UTP. May have a dual role in cell division arrest and in preventing the incorporation of modified nucleotides into cellular nucleic acids. The sequence is that of dTTP/UTP pyrophosphatase from Albidiferax ferrireducens (strain ATCC BAA-621 / DSM 15236 / T118) (Rhodoferax ferrireducens).